The chain runs to 5065 residues: Dynein heavy chain-like protein 1 (5065 aa).

Residues 1–1957 (MELEKTHLIN…IIKMADATFE (1957 aa)) are stem. Positions 1677–1705 (QMEGFQKQLDRLSDSLSKIQKALGEYLEK) form a coiled coil. An AAA 1 region spans residues 1958-2179 (YGYEYLGMCE…LRSLKSVLNS (222 aa)). 1996 to 2003 (GPAGTGKT) serves as a coordination point for ATP. Residues 2203-2223 (FNETLDNNNNNDNNNERKTTT) are disordered. Positions 2204-2215 (NETLDNNNNNDN) are enriched in low complexity. AAA regions lie at residues 2281–2632 (NEIH…YEYI), 2751–3004 (DVDR…WKLA), and 3097–3367 (IFNE…GNRY). Position 2319–2326 (2319–2326 (GDVGTGKS)) interacts with ATP. Residues 2507–2529 (EKNQNGNENGNENEKKNINIINN) are disordered. Residues 2790 to 2797 (GPPGSGKT) and 3135 to 3142 (GASGAGKT) each bind ATP. Residues 3386–3701 (IDEKKEEVSS…ETFINLEEAS (316 aa)) form a stalk region. 2 coiled-coil regions span residues 3388 to 3466 (EKKE…LDEQ) and 3970 to 3997 (TMEK…EVEN). AAA regions lie at residues 3754–3983 (LSRP…EASK) and 4289–4507 (FNKI…VVDS). The span at 4686–4705 (KDKNKDEDKNKNKENDDNNK) shows a compositional bias: basic and acidic residues. Positions 4686 to 4727 (KDKNKDEDKNKNKENDDNNKKHIGNNKLVISSSERTESETSE) are disordered.

The protein belongs to the dynein heavy chain family. As to quaternary structure, consists of at least two heavy chains and a number of intermediate and light chains.

It localises to the cytoplasm. The protein localises to the cytoskeleton. Its function is as follows. Acts as a motor for the intracellular retrograde motility of vesicles and organelles along microtubules. Dynein has ATPase activity; the force-producing power stroke is thought to occur on release of ADP. In Plasmodium falciparum (isolate 3D7), this protein is Dynein heavy chain-like protein 1.